We begin with the raw amino-acid sequence, 397 residues long: 2,3-bisphosphoglycerate-independent phosphoglycerate mutase (397 aa).

This sequence belongs to the BPG-independent phosphoglycerate mutase family. A-PGAM subfamily.

It catalyses the reaction (2R)-2-phosphoglycerate = (2R)-3-phosphoglycerate. It functions in the pathway carbohydrate degradation; glycolysis; pyruvate from D-glyceraldehyde 3-phosphate: step 3/5. Functionally, catalyzes the interconversion of 2-phosphoglycerate and 3-phosphoglycerate. The sequence is that of 2,3-bisphosphoglycerate-independent phosphoglycerate mutase (apgM) from Methanosarcina mazei (strain ATCC BAA-159 / DSM 3647 / Goe1 / Go1 / JCM 11833 / OCM 88) (Methanosarcina frisia).